The primary structure comprises 435 residues: Estrogen-related receptor gamma (435 aa).

The disordered stretch occupies residues 1–64 (MSNKDRHIDS…GLDSPPLYPS (64 aa)). Positions 10–29 (SSCSSFIKTEPSSPASLTDS) are enriched in polar residues. Low complexity predominate over residues 34 to 47 (SPGGSSDASGSYSS). Residues 102–177 (KRLCLVCGDI…VGMLKEGVRL (76 aa)) constitute a DNA-binding region (nuclear receptor). NR C4-type zinc fingers lie at residues 105 to 125 (CLVC…CEAC) and 141 to 160 (CPAT…CQAC). Residues 210 to 434 (PYNKIVSHLL…KLFSEMLEAK (225 aa)) form the NR LBD domain.

Belongs to the nuclear hormone receptor family. NR3 subfamily. As to quaternary structure, homodimer. Interacts with NRIP1, NCOA1 and NCOR2. Binds TLE1, PNRC1 and PNRC2. Binds GRIP1. Acetylated by PCAF/KAT2 (in vitro).

It localises to the nucleus. In terms of biological role, orphan receptor that acts as a transcription activator in the absence of bound ligand. Binds specifically to an estrogen response element and activates reporter genes controlled by estrogen response elements. Induces the expression of PERM1 in the skeletal muscle. The protein is Estrogen-related receptor gamma (ESRRG) of Pongo abelii (Sumatran orangutan).